The sequence spans 2334 residues: Centriolin (2334 aa).

The interval 1–70 is disordered; that stretch reads MKKGSERRLS…ESTVPLEPQQ (70 aa). The segment covering 21 to 38 has biased composition (low complexity); sequence PGPSSLRSSMRSRSLSPL. LRR repeat units lie at residues 126-147, 148-169, 170-191, and 194-215; these read KLEV…DKLL, RLRE…ENMC, NLQK…FAKK, and SLRV…SKLK. Residues 228 to 266 form the LRRCT domain; the sequence is NPVVALPHYLQFIIFHLRSLESLEGQPVTTQDRQEAFER. Coiled-coil stretches lie at residues 265 to 343 and 437 to 800; these read ERFS…VELT and DLQL…LNHV. 2 disordered regions span residues 542–562 and 751–771; these read DSLD…RGKE and SLRD…ENNE. A Phosphoserine modification is found at S832. A coiled-coil region spans residues 858-1102; it reads EKEEAQVRER…ITRLRDVLNL (245 aa). Disordered stretches follow at residues 1154–1198, 1213–1245, and 1338–1360; these read SKVS…PLPA, KSFS…VPPP, and LKSK…EEVD. Residues 1227–1238 are compositionally biased toward acidic residues; that stretch reads SQEESGLDDQEE. Residues 1320-2169 adopt a coiled-coil conformation; that stretch reads EHHNLENEVS…MRTLKSEVKD (850 aa). At S1478 the chain carries Phosphoserine. Residues 1951–2121 are required for centrosome localization; that stretch reads MMFQKLQKER…ELVAQDNHER (171 aa). Residues 1988–2334 are sufficient for interaction with HOOK2; that stretch reads QKSRLKQLLT…PLEEPNSYRH (347 aa). A compositionally biased stretch (low complexity) spans 2291–2307; it reads TSTSTDSASSPSLPSLV. The interval 2291-2334 is disordered; the sequence is TSTSTDSASSPSLPSLVEDSQHGHSQSSFQVLQVPLEEPNSYRH.

As to quaternary structure, interacts with HOOK2. Interacts with EXOC6 and SNAPIN. Associates with the exocyst complex. In terms of tissue distribution, highly expressed in liver.

The protein localises to the cytoplasm. It is found in the cytoskeleton. The protein resides in the microtubule organizing center. Its subcellular location is the centrosome. It localises to the midbody. The protein localises to the midbody ring. Its function is as follows. Involved in cell cycle progression and cytokinesis. During the late steps of cytokinesis, anchors exocyst and SNARE complexes at the midbody, thereby allowing secretory vesicle-mediated abscission. In Mus musculus (Mouse), this protein is Centriolin (Cntrl).